Here is a 376-residue protein sequence, read N- to C-terminus: Carbamoyl phosphate synthase small chain (376 aa).

The interval 1-183 is CPSase; the sequence is MENILLNKAL…IYKKKYIEKN (183 aa). L-glutamine is bound by residues serine 51, glycine 235, and glycine 237. The 188-residue stretch at 187-374 folds into the Glutamine amidotransferase type-1 domain; that stretch reads NIVAYDFGIK…INLVKDYRLN (188 aa). Cysteine 263 functions as the Nucleophile in the catalytic mechanism. The L-glutamine site is built by leucine 264, glutamine 267, asparagine 305, and phenylalanine 308. Residues histidine 347 and glutamate 349 contribute to the active site.

Belongs to the CarA family. In terms of assembly, composed of two chains; the small (or glutamine) chain promotes the hydrolysis of glutamine to ammonia, which is used by the large (or ammonia) chain to synthesize carbamoyl phosphate. Tetramer of heterodimers (alpha,beta)4.

The enzyme catalyses hydrogencarbonate + L-glutamine + 2 ATP + H2O = carbamoyl phosphate + L-glutamate + 2 ADP + phosphate + 2 H(+). The catalysed reaction is L-glutamine + H2O = L-glutamate + NH4(+). It functions in the pathway amino-acid biosynthesis; L-arginine biosynthesis; carbamoyl phosphate from bicarbonate: step 1/1. The protein operates within pyrimidine metabolism; UMP biosynthesis via de novo pathway; (S)-dihydroorotate from bicarbonate: step 1/3. Small subunit of the glutamine-dependent carbamoyl phosphate synthetase (CPSase). CPSase catalyzes the formation of carbamoyl phosphate from the ammonia moiety of glutamine, carbonate, and phosphate donated by ATP, constituting the first step of 2 biosynthetic pathways, one leading to arginine and/or urea and the other to pyrimidine nucleotides. The small subunit (glutamine amidotransferase) binds and cleaves glutamine to supply the large subunit with the substrate ammonia. The sequence is that of Carbamoyl phosphate synthase small chain from Wigglesworthia glossinidia brevipalpis.